The primary structure comprises 160 residues: Peptidyl-prolyl cis-trans isomerase CYP18-1 (160 aa).

Residues 3–153 (VTLHTNLGDI…AEIRLNRVTI (151 aa)) enclose the PPIase cyclophilin-type domain.

Belongs to the cyclophilin-type PPIase family. In terms of tissue distribution, ubiquitous.

It is found in the cytoplasm. The catalysed reaction is [protein]-peptidylproline (omega=180) = [protein]-peptidylproline (omega=0). Its function is as follows. PPIases accelerate the folding of proteins. It catalyzes the cis-trans isomerization of proline imidic peptide bonds in oligopeptides. The protein is Peptidyl-prolyl cis-trans isomerase CYP18-1 (CYP18-1) of Arabidopsis thaliana (Mouse-ear cress).